A 342-amino-acid chain; its full sequence is Phenylalanine--tRNA ligase alpha subunit (342 aa).

Glutamate 260 lines the Mg(2+) pocket.

This sequence belongs to the class-II aminoacyl-tRNA synthetase family. Phe-tRNA synthetase alpha subunit type 1 subfamily. Tetramer of two alpha and two beta subunits. Mg(2+) serves as cofactor.

The protein localises to the cytoplasm. The enzyme catalyses tRNA(Phe) + L-phenylalanine + ATP = L-phenylalanyl-tRNA(Phe) + AMP + diphosphate + H(+). The sequence is that of Phenylalanine--tRNA ligase alpha subunit from Mycobacterium avium (strain 104).